Consider the following 378-residue polypeptide: 5-amino-6-(D-ribitylamino)uracil--L-tyrosine 4-hydroxyphenyl transferase (378 aa).

Residues 59–306 (VTYVINRNIN…TAVARIYLGN (248 aa)) form the Radical SAM core domain. Cys-73, Cys-77, and Cys-80 together coordinate [4Fe-4S] cluster.

Belongs to the radical SAM superfamily. CofH family. Consists of two subunits, CofG and CofH. The cofactor is [4Fe-4S] cluster.

The catalysed reaction is 5-amino-6-(D-ribitylamino)uracil + L-tyrosine + S-adenosyl-L-methionine = 5-amino-5-(4-hydroxybenzyl)-6-(D-ribitylimino)-5,6-dihydrouracil + 2-iminoacetate + 5'-deoxyadenosine + L-methionine + H(+). It functions in the pathway cofactor biosynthesis; coenzyme F0 biosynthesis. Its function is as follows. Catalyzes the radical-mediated synthesis of 5-amino-5-(4-hydroxybenzyl)-6-(D-ribitylimino)-5,6-dihydrouracil from 5-amino-6-(D-ribitylamino)uracil and L-tyrosine. The sequence is that of 5-amino-6-(D-ribitylamino)uracil--L-tyrosine 4-hydroxyphenyl transferase from Microcystis aeruginosa (strain NIES-843 / IAM M-2473).